The chain runs to 370 residues: Accessory Sec system protein translocase subunit SecY2 (370 aa).

9 helical membrane-spanning segments follow: residues Ile-17–Thr-37, Val-65–Tyr-85, Ile-105–His-125, Trp-134–Asn-154, Met-155–Met-175, Leu-188–Ile-208, Ile-240–Val-260, Phe-276–Ile-296, and Trp-339–Ile-359.

Belongs to the SecY/SEC61-alpha family. SecY2 subfamily. As to quaternary structure, component of the accessory SecA2/SecY2 protein translocase complex required to export cell wall proteins. May form heterotrimers with SecE and SecG subunits.

It localises to the cell membrane. In terms of biological role, part of the accessory SecA2/SecY2 system specifically required for export of possible cell wall proteins. The central subunit of a protein translocation channel. The protein is Accessory Sec system protein translocase subunit SecY2 of Staphylococcus carnosus (strain TM300).